A 100-amino-acid chain; its full sequence is Small ribosomal subunit protein uS14 (100 aa).

The protein belongs to the universal ribosomal protein uS14 family. Part of the 30S ribosomal subunit. Contacts proteins S3 and S10.

In terms of biological role, binds 16S rRNA, required for the assembly of 30S particles and may also be responsible for determining the conformation of the 16S rRNA at the A site. This is Small ribosomal subunit protein uS14 from Parasynechococcus marenigrum (strain WH8102).